A 340-amino-acid polypeptide reads, in one-letter code: DNA-directed RNA polymerase subunit alpha (340 aa).

The interval 1 to 235 (MYRNWTELIK…DQLNPFINFD (235 aa)) is alpha N-terminal domain (alpha-NTD). The alpha C-terminal domain (alpha-CTD) stretch occupies residues 251-340 (WNPNLFRKVD…LSKQFEEENF (90 aa)).

This sequence belongs to the RNA polymerase alpha chain family. In terms of assembly, homodimer. The RNAP catalytic core consists of 2 alpha, 1 beta, 1 beta' and 1 omega subunit. When a sigma factor is associated with the core the holoenzyme is formed, which can initiate transcription.

The catalysed reaction is RNA(n) + a ribonucleoside 5'-triphosphate = RNA(n+1) + diphosphate. DNA-dependent RNA polymerase catalyzes the transcription of DNA into RNA using the four ribonucleoside triphosphates as substrates. The protein is DNA-directed RNA polymerase subunit alpha of Magnetococcus marinus (strain ATCC BAA-1437 / JCM 17883 / MC-1).